The following is a 122-amino-acid chain: Large ribosomal subunit protein bL12 (122 aa).

It belongs to the bacterial ribosomal protein bL12 family. As to quaternary structure, homodimer. Part of the ribosomal stalk of the 50S ribosomal subunit. Forms a multimeric L10(L12)X complex, where L10 forms an elongated spine to which 2 to 4 L12 dimers bind in a sequential fashion. Binds GTP-bound translation factors.

Forms part of the ribosomal stalk which helps the ribosome interact with GTP-bound translation factors. Is thus essential for accurate translation. In Buchnera aphidicola subsp. Cinara cedri (strain Cc), this protein is Large ribosomal subunit protein bL12.